The sequence spans 625 residues: MAU2 chromatid cohesion factor homolog (625 aa).

TPR repeat units lie at residues Phe96–Asn129, Gly451–Glu484, and Ser491–Ile524. The span at Thr600–Leu611 shows a compositional bias: polar residues. The tract at residues Thr600–Tyr625 is disordered. Positions Gln612–Tyr625 are enriched in low complexity.

The protein belongs to the SCC4/mau-2 family. As to quaternary structure, interacts with Nipped-B to form the cohesin loading complex.

Its subcellular location is the nucleus. The protein localises to the nucleoplasm. In terms of biological role, required for association of the cohesin complex with chromatin during interphase. Plays a role in sister chromatid cohesion and normal progression through prometaphase. The polypeptide is MAU2 chromatid cohesion factor homolog (Drosophila mojavensis (Fruit fly)).